Consider the following 530-residue polypeptide: Autoinducer-2 kinase (530 aa).

It belongs to the FGGY kinase family.

It localises to the cytoplasm. The enzyme catalyses (S)-4,5-dihydroxypentane-2,3-dione + ATP = (2S)-2-hydroxy-3,4-dioxopentyl phosphate + ADP + H(+). Catalyzes the phosphorylation of autoinducer-2 (AI-2) to phospho-AI-2, which subsequently inactivates the transcriptional regulator LsrR and leads to the transcription of the lsr operon. Phosphorylates the ring-open form of (S)-4,5-dihydroxypentane-2,3-dione (DPD), which is the precursor to all AI-2 signaling molecules, at the C5 position. This is Autoinducer-2 kinase from Yersinia pseudotuberculosis serotype O:1b (strain IP 31758).